The primary structure comprises 155 residues: Ribosomal RNA large subunit methyltransferase H (155 aa).

Residues leucine 72, glycine 103, and 122-127 (LSPLTL) each bind S-adenosyl-L-methionine.

This sequence belongs to the RNA methyltransferase RlmH family. Homodimer.

The protein resides in the cytoplasm. It catalyses the reaction pseudouridine(1915) in 23S rRNA + S-adenosyl-L-methionine = N(3)-methylpseudouridine(1915) in 23S rRNA + S-adenosyl-L-homocysteine + H(+). Functionally, specifically methylates the pseudouridine at position 1915 (m3Psi1915) in 23S rRNA. This Aeromonas salmonicida (strain A449) protein is Ribosomal RNA large subunit methyltransferase H.